We begin with the raw amino-acid sequence, 387 residues long: 2-alkyl-3-oxoalkanoate reductase (387 aa).

Y190 (proton acceptor) is an active-site residue. K194 contributes to the NADP(+) binding site.

The protein belongs to the 3-beta-HSD family.

It carries out the reaction a (2R,3S)-2-alkyl-3-hydroxyalkanoate + NADP(+) = an (R)-2-alkyl-3-oxoalkanoate + NADPH + H(+). In terms of biological role, involved in olefin biosynthesis. Catalyzes the reversible stereospecific NADPH-dependent reduction of 2-alkyl-3-oxoalkanoic acids to 2-alkyl-3-hydroxyalkanoic acids. The S.oneidensis oleABCD genes produce 3,6,9,12,15,19,22,25,28-hentriacontanonaene, which may aid the cells in adapting to a sudden drop in temperature. The sequence is that of 2-alkyl-3-oxoalkanoate reductase from Shewanella oneidensis (strain ATCC 700550 / JCM 31522 / CIP 106686 / LMG 19005 / NCIMB 14063 / MR-1).